A 100-amino-acid polypeptide reads, in one-letter code: Large ribosomal subunit protein uL23 (100 aa).

It belongs to the universal ribosomal protein uL23 family. Part of the 50S ribosomal subunit. Contacts protein L29, and trigger factor when it is bound to the ribosome.

One of the early assembly proteins it binds 23S rRNA. One of the proteins that surrounds the polypeptide exit tunnel on the outside of the ribosome. Forms the main docking site for trigger factor binding to the ribosome. The protein is Large ribosomal subunit protein uL23 of Idiomarina loihiensis (strain ATCC BAA-735 / DSM 15497 / L2-TR).